A 100-amino-acid chain; its full sequence is UPF0213 protein YhbQ (100 aa).

Positions 2–77 (TPWFLYLIRT…KQLTKRQKER (76 aa)) constitute a GIY-YIG domain.

The protein belongs to the UPF0213 family.

This chain is UPF0213 protein YhbQ, found in Shigella dysenteriae serotype 1 (strain Sd197).